The sequence spans 203 residues: Ras-related protein Rab-8B (203 aa).

GTP-binding positions include 22 to 29, 70 to 74, and 128 to 131; these read GDSGVGKS, DTAGQ, and NKCD. S-geranylgeranyl cysteine attachment occurs at residues cysteine 202 and cysteine 203.

This sequence belongs to the small GTPase superfamily. Rab family.

It is found in the cell membrane. In terms of biological role, protein transport. Probably involved in vesicular traffic. The sequence is that of Ras-related protein Rab-8B (rab8B) from Dictyostelium discoideum (Social amoeba).